Here is a 63-residue protein sequence, read N- to C-terminus: Large ribosomal subunit protein uL30 (63 aa).

The protein belongs to the universal ribosomal protein uL30 family. Part of the 50S ribosomal subunit.

In Caulobacter sp. (strain K31), this protein is Large ribosomal subunit protein uL30.